Consider the following 241-residue polypeptide: Tumor necrosis factor receptor superfamily member 18 (241 aa).

An N-terminal signal peptide occupies residues M1 to G25. Topologically, residues Q26–P162 are extracellular. 5 disulfides stabilise this stretch: C34/C49, C74/C86, C81/C94, C115/C134, and C128/C153. TNFR-Cys repeat units follow at residues C34–C72, C74–C112, and C115–C153. A glycan (N-linked (GlcNAc...) asparagine) is linked at N146. Residues L163–A183 traverse the membrane as a helical segment. Topologically, residues Q184 to V241 are cytoplasmic. Residues D214 to V241 are disordered. The span at E222–V241 shows a compositional bias: basic and acidic residues.

Binds to TRAF1, TRAF2, and TRAF3, but not TRAF5 and TRAF6. Binds through its C-terminus to SIVA1/SIVA. As to expression, expressed in lymph node, peripheral blood leukocytes and weakly in spleen.

The protein resides in the cell membrane. It is found in the secreted. In terms of biological role, receptor for TNFSF18. Seems to be involved in interactions between activated T-lymphocytes and endothelial cells and in the regulation of T-cell receptor-mediated cell death. Mediated NF-kappa-B activation via the TRAF2/NIK pathway. The sequence is that of Tumor necrosis factor receptor superfamily member 18 (TNFRSF18) from Homo sapiens (Human).